The chain runs to 100 residues: Urease subunit gamma (100 aa).

It belongs to the urease gamma subunit family. Heterotrimer of UreA (gamma), UreB (beta) and UreC (alpha) subunits. Three heterotrimers associate to form the active enzyme.

The protein localises to the cytoplasm. The enzyme catalyses urea + 2 H2O + H(+) = hydrogencarbonate + 2 NH4(+). It functions in the pathway nitrogen metabolism; urea degradation; CO(2) and NH(3) from urea (urease route): step 1/1. This chain is Urease subunit gamma, found in Saccharopolyspora erythraea (strain ATCC 11635 / DSM 40517 / JCM 4748 / NBRC 13426 / NCIMB 8594 / NRRL 2338).